The primary structure comprises 624 residues: Chaperone protein HtpG (624 aa).

Residues 1–336 (MKGQETRGFQ…SSDLPLNVSR (336 aa)) are a; substrate-binding. Residues 337 to 552 (EILQDSTVTR…ADEMSTQMAK (216 aa)) are b. The c stretch occupies residues 553 to 624 (LFAAAGQKVP…IRRMNQLLVS (72 aa)).

Belongs to the heat shock protein 90 family. As to quaternary structure, homodimer.

The protein localises to the cytoplasm. In terms of biological role, molecular chaperone. Has ATPase activity. In Shigella flexneri, this protein is Chaperone protein HtpG.